We begin with the raw amino-acid sequence, 108 residues long: Nucleoid-associated protein Avin_19840 (108 aa).

It belongs to the YbaB/EbfC family. Homodimer.

It localises to the cytoplasm. The protein localises to the nucleoid. Binds to DNA and alters its conformation. May be involved in regulation of gene expression, nucleoid organization and DNA protection. This is Nucleoid-associated protein Avin_19840 from Azotobacter vinelandii (strain DJ / ATCC BAA-1303).